Here is a 320-residue protein sequence, read N- to C-terminus: Ribosomal RNA large subunit methyltransferase F (320 aa).

Positions 1 to 20 are disordered; sequence MHKSANSKTRKQSKGLHPRN.

It belongs to the methyltransferase superfamily. METTL16/RlmF family.

It localises to the cytoplasm. It carries out the reaction adenosine(1618) in 23S rRNA + S-adenosyl-L-methionine = N(6)-methyladenosine(1618) in 23S rRNA + S-adenosyl-L-homocysteine + H(+). In terms of biological role, specifically methylates the adenine in position 1618 of 23S rRNA. The chain is Ribosomal RNA large subunit methyltransferase F from Saccharophagus degradans (strain 2-40 / ATCC 43961 / DSM 17024).